A 613-amino-acid chain; its full sequence is Secretogranin-2 (613 aa).

The N-terminal stretch at 1 to 27 is a signal peptide; it reads MAEAKTHWLGAVLSLIPLIFLLSEAEA. Positions 28–30 are excised as a propeptide; it reads ASF. 2 disordered regions span residues 67–105 and 119–146; these read QQAH…DSLS and QAEN…PMDM. Over residues 92–105 the composition is skewed to basic and acidic residues; sequence ENGDLPESSRDSLS. Position 150 is a sulfotyrosine (Tyr150). Phosphoserine occurs at positions 173, 267, 428, 528, 551, and 552. Residues 257–283 show a composition bias toward basic and acidic residues; the sequence is ESQTQEEVRDSKENADKTEQINDEMKR. A disordered region spans residues 257–287; it reads ESQTQEEVRDSKENADKTEQINDEMKRSGQL. Over residues 546–557 the composition is skewed to basic and acidic residues; that stretch reads HLSQHSSQETDK. The disordered stretch occupies residues 546 to 580; the sequence is HLSQHSSQETDKLASVSKRLPVGTPKSDDTPNRPY.

It belongs to the chromogranin/secretogranin protein family. As to quaternary structure, interacts with Secretogranin III/SCG3. Highest levels detected in anterior pituitary followed by adrenal medulla and posterior pituitary (at protein level). In the brain, high levels are found in the hypothalamus, comparable to those present in posterior pituitary with two- to six-fold lower levels present in the other brain regions investigated including caudate nucleus, hippocampus, thalamus and brainstem (at protein level).

Its subcellular location is the secreted. Neuroendocrine protein of the granin family that regulates the biogenesis of secretory granules. The chain is Secretogranin-2 (SCG2) from Bos taurus (Bovine).